We begin with the raw amino-acid sequence, 265 residues long: tRNA pseudouridine synthase A (265 aa).

The active-site Nucleophile is aspartate 58. Position 116 (tyrosine 116) interacts with substrate.

It belongs to the tRNA pseudouridine synthase TruA family. Homodimer.

It carries out the reaction uridine(38/39/40) in tRNA = pseudouridine(38/39/40) in tRNA. Functionally, formation of pseudouridine at positions 38, 39 and 40 in the anticodon stem and loop of transfer RNAs. The chain is tRNA pseudouridine synthase A from Neisseria gonorrhoeae (strain ATCC 700825 / FA 1090).